A 478-amino-acid polypeptide reads, in one-letter code: Cytochrome P450 family 716 subfamily AD polypeptide 4 (478 aa).

The chain crosses the membrane as a helical span at residues Met-1–Phe-21. Cys-425 is a heme binding site.

This sequence belongs to the cytochrome P450 family. Requires heme as cofactor. As to expression, mainly expressed in petioles and, to a lower extent, in roots.

The protein localises to the membrane. The enzyme catalyses (1S,3bR,4R,5aR,9aR,9bR,11aS)-1-[(4R)-5-[(2S)-3,3-dimethyloxiran-2-yl]-1,4-dihydroxybutan-2-yl]-3b,6,6,9a,11a-pentamethyl-7-oxo-1H,2H,3bH,4H,5H,5aH,6H,7H,9aH,9bH,10H,11H,11aH-cyclopenta[a]phenanthren-4-yl acetate + reduced [NADPH--hemoprotein reductase] + O2 = (1S,3bR,4R,5aR,9aR,9bR,11aS)-1-(1-hydroxy-4-oxobutan-2-yl)-3b,6,6,9a,11a-pentamethyl-7-oxo-1H,2H,3bH,4H,5H,5aH,6H,7H,9aH,9bH,10H,11H,11aH-cyclopenta[a]phenanthren-4-yl acetate + 2-methylpropanoate + oxidized [NADPH--hemoprotein reductase] + H2O + 2 H(+). Its pathway is secondary metabolite biosynthesis; terpenoid biosynthesis. Functionally, monooxygenase involved in the biosynthesis of limonoids triterpene natural products such as azadirachtin, an antifeedant widely used as bioinsecticide, and possessing many medicinal applications including anti-tumoral, anti-malarial, anti-rheumatic, antibacterial, anti-inflammatory, anti-pyretic and diuretic effects. Catalyzes the formation of (1S,3bR,4R,5aR,9aR,9bR,11aS)-1-(1-hydroxy-4-oxobutan-2-yl)-3b,6,6,9a,11a-pentamethyl-7-oxo-1H,2H,3bH,4H,5H,5aH,6H,7H,9aH,9bH,10H,11H,11aH-cyclopenta[a]phenanthren-4-yl acetate. This Melia azedarach (Chinaberry tree) protein is Cytochrome P450 family 716 subfamily AD polypeptide 4.